The sequence spans 266 residues: Protein-ADP-ribose hydrolase (266 aa).

The Macro domain maps to 74 to 265; that stretch reads TDLKDLKPIK…LYKEAFNRDA (192 aa). 3 residues coordinate ADP-D-ribose: Asp93, Ile94, and Asn107. Residues Cys113, His118, and Cys120 each contribute to the Zn(2+) site. Positions 120, 121, 122, 212, 213, 214, and 216 each coordinate ADP-D-ribose.

It belongs to the MacroD-type family. Zn-Macro subfamily. Requires Zn(2+) as cofactor.

The catalysed reaction is 4-O-(ADP-D-ribosyl)-L-aspartyl-[protein] + H2O = L-aspartyl-[protein] + ADP-D-ribose + H(+). In terms of biological role, ADP-ribosylhydrolase that specifically reverses the SirTM-mediated mono-ADP-ribosylation at an asparatate residue of GcvH-L, by releasing ADP-ribose from the target protein. May play a role in the regulation of the response to host-induced oxidative stress. This is Protein-ADP-ribose hydrolase from Staphylococcus aureus (strain MSSA476).